A 326-amino-acid chain; its full sequence is Olfactory receptor 11H2 (326 aa).

Residues 1–44 (MCPLTLHVTGLMNVSEPNSSFAFVNEFILQGFSCEWTIQIFLFS) lie on the Extracellular side of the membrane. 2 N-linked (GlcNAc...) asparagine glycosylation sites follow: Asn13 and Asn18. The helical transmembrane segment at 45–65 (LFTTIYALTITGNGAIAFVLW) threads the bilayer. The Cytoplasmic segment spans residues 66–72 (CDRRLHT). The helical transmembrane segment at 73–93 (PMYMFLGNFSFLEIWYVSSTV) threads the bilayer. Topologically, residues 94-112 (PKMLVNFLSEKKNISFAGC) are extracellular. An N-linked (GlcNAc...) asparagine glycan is attached at Asn106. Cys112 and Cys194 form a disulfide bridge. A helical membrane pass occupies residues 113 to 133 (FLQFYFFFSLGTSECLLLTVM). Residues 134-158 (AFDQYLAICRPLLYPNIMTGHLYAK) lie on the Cytoplasmic side of the membrane. The helical transmembrane segment at 159-179 (LVILCWVCGFLWFLIPIVLIS) threads the bilayer. The Extracellular segment spans residues 180-216 (QKPFCGPNIIDHVVCDPGPLFALDCVSAPRIQLFCYT). The helical transmembrane segment at 217–237 (LSSLVIFGNFLFIIGSYTLVL) threads the bilayer. Topologically, residues 238–259 (KAVLGMPSSTGRHKAFSTCGSH) are cytoplasmic. A helical membrane pass occupies residues 260–280 (LAVVSLCYSPLMVMYVSPGLG). Over 281–287 (HSTGMQK) the chain is Extracellular. A helical membrane pass occupies residues 288-308 (IETLFYAMVTPLFNPLIYSLQ). At 309 to 326 (NKEIKAALRKVLGSSNII) the chain is on the cytoplasmic side.

It belongs to the G-protein coupled receptor 1 family.

Its subcellular location is the cell membrane. Odorant receptor. This is Olfactory receptor 11H2 (OR11H2) from Homo sapiens (Human).